Consider the following 215-residue polypeptide: RWD domain-containing protein C1393.09c (215 aa).

The RWD domain maps to 7–114 (EEREILESIY…SVAKEETNAI (108 aa)).

It is found in the cytoplasm. The protein localises to the nucleus. In Schizosaccharomyces pombe (strain 972 / ATCC 24843) (Fission yeast), this protein is RWD domain-containing protein C1393.09c.